A 273-amino-acid polypeptide reads, in one-letter code: SUMO-1 cysteine protease S273R (273 aa).

Residues His-168 and Asn-187 contribute to the active site. Substrate is bound at residue Gln-226. Cys-232 serves as the catalytic Nucleophile.

This sequence belongs to the peptidase C63 family.

The protein resides in the host cytoplasm. The protein localises to the virion. Its function is as follows. Cysteine protease that plays several role during infection including processing of the structural polyprotein or inhibition of the host immune response. Catalyzes the maturation of the pp220 and pp62 polyprotein precursors into core-shell proteins. Plays a role in the disruption of host pyroptosis via specific cleavage of gasdermin D/GSDMD. In addition, strongly decreases the host cGAS-STING signaling by targeting IKBKE via its enzymatic activity. Also impairs host FOXJ1-mediated antiviral effect via degradation of FOXJ1. The sequence is that of SUMO-1 cysteine protease S273R from Ornithodoros (relapsing fever ticks).